The sequence spans 79 residues: MKTQLAFLAITVILMQLFAQTEAGFWGKLWEGVKNAIGKRGLRNVDQIADLFDSGLSDADDLFDSGLSDADAKFMKMFM.

An N-terminal signal peptide occupies residues 1–23 (MKTQLAFLAITVILMQLFAQTEA). An Isoleucine amide modification is found at isoleucine 37. A propeptide spanning residues 41–79 (GLRNVDQIADLFDSGLSDADDLFDSGLSDADAKFMKMFM) is cleaved from the precursor.

Belongs to the non-disulfide-bridged peptide (NDBP) superfamily. Short antimicrobial peptide (group 4) family. In terms of tissue distribution, expressed by the venom gland.

Its subcellular location is the secreted. It localises to the target cell membrane. In terms of biological role, inhibits the growth of Gram-positive (S.aureus, MIC=15 uM) and Gram-negative bacteria (E.coli, MIC=10 uM and P.aeruginosa, MIC=10 uM). It also shows 26% of hemolysis when 15 uM are tested (81% at 50 uM). Inhibits the growth of Gram-negative bacteria (E.coli, MIC=25 uM and P.aeruginosa, MIC=40 uM). It also shows 7% of hemolysis when 50 uM are tested. Does not show activity against the Gram-positive bacteria S.aureus. The sequence is that of Antimicrobial peptide UyCT1 from Urodacus yaschenkoi (Inland robust scorpion).